A 130-amino-acid chain; its full sequence is MARDVEAQLNYIESLISSVDSQIDTLNKAMIEVQSTIDLLSNGDLASSPEKLISIGSGLFAKGNITIDEDLIVPIGSGIYVAETKERSVERLKKNLEDIKASIQKLLDQRKTLVDQYNTVYATEATRNVK.

It belongs to the prefoldin subunit alpha family. As to quaternary structure, heterohexamer of two alpha and four beta subunits.

It is found in the cytoplasm. Functionally, molecular chaperone capable of stabilizing a range of proteins. Seems to fulfill an ATP-independent, HSP70-like function in archaeal de novo protein folding. This is Prefoldin subunit alpha (pfdA) from Thermoplasma acidophilum (strain ATCC 25905 / DSM 1728 / JCM 9062 / NBRC 15155 / AMRC-C165).